Reading from the N-terminus, the 298-residue chain is ADP/ATP translocase 2 (298 aa).

Methionine 1 is modified (N-acetylmethionine). Over 1 to 7 (MTDAAVS) the chain is Mitochondrial intermembrane. At threonine 2 the chain carries N-acetylthreonine; in ADP/ATP translocase 2, N-terminally processed. One copy of the Solcar 1 repeat lies at 6–98 (VSFAKDFLAG…FAFKDKYKQI (93 aa)). Serine 7 carries the phosphoserine modification. Residues 8 to 37 (FAKDFLAGGVAAAISKTAVAPIERVKLLLQ) traverse the membrane as a helical segment. At lysine 23 the chain carries N6-malonyllysine. Residues 38–74 (VQHASKQITADKQYKGIMDCVVRIPKEQGVLSFWRGN) are Mitochondrial matrix-facing. At lysine 43 the chain carries N6-succinyllysine. Lysine 52 is modified (N6,N6,N6-trimethyllysine; alternate). Lysine 52 carries the post-translational modification N6,N6-dimethyllysine; alternate. Position 52 is an N6-methyllysine; alternate (lysine 52). The helical transmembrane segment at 75–99 (LANVIRYFPTQALNFAFKDKYKQIF) threads the bilayer. 2 residues coordinate ADP: arginine 80 and lysine 92. Residues lysine 92 and lysine 96 each carry the N6-malonyllysine modification. Over 100 to 109 (LGGVDKRTQF) the chain is Mitochondrial intermembrane. Position 105 is an N6-acetyllysine; alternate (lysine 105). Lysine 105 carries the post-translational modification N6-succinyllysine; alternate. Residues 110 to 130 (WRYFAGNLASGGAAGATSLCF) traverse the membrane as a helical segment. Solcar repeat units lie at residues 111-201 (RYFA…AKGM) and 212-297 (ISWM…IKKY). The Mitochondrial matrix portion of the chain corresponds to 131 to 178 (VYPLDFARTRLAADVGKAGDAREFKGLGDCLVKITKSDGIRGLYQGFN). Lysine 147 carries the post-translational modification N6-methyllysine; alternate. N6-acetyllysine; alternate occurs at positions 147 and 155. 2 positions are modified to N6-succinyllysine; alternate: lysine 147 and lysine 155. The residue at position 147 (lysine 147) is an N6-malonyllysine; alternate. N6-acetyllysine is present on residues lysine 163 and lysine 166. Residues 179–199 (VSVQGIIIYRAAYFGIYDTAK) form a helical membrane-spanning segment. Topologically, residues 200–210 (GMLPDPKNTHI) are mitochondrial intermembrane. A helical transmembrane segment spans residues 211–231 (FISWMIAQSVTAVAGLTSYPF). The Mitochondrial matrix portion of the chain corresponds to 232-273 (DTVRRRMMMQSGRKGSDIMYTGTIDCWKKIARDEGSKAFFKG). Arginine 235 lines the ADP pocket. The segment at 235–240 (RRRMMM) is important for transport activity. The short motif at 235-240 (RRRMMM) is the Nucleotide carrier signature motif element. N6-acetyllysine; alternate is present on lysine 268. At lysine 268 the chain carries N6-succinyllysine; alternate. The chain crosses the membrane as a helical span at residues 274–291 (AWSNVLRGMGGAFVLVLY). The Mitochondrial intermembrane portion of the chain corresponds to 292 to 298 (DEIKKYT).

This sequence belongs to the mitochondrial carrier (TC 2.A.29) family. In terms of assembly, monomer. Component of the MMXD complex, which includes CIAO1, ERCC2, CIAO2B, MMS19 and SLC25A5/ANT2. Interacts with AK4. Interacts with TIMM44; leading to inhibit the presequence translocase TIMM23, thereby promoting stabilization of PINK1. In terms of processing, trimethylated by ANTKMT at Lys-52.

The protein localises to the mitochondrion inner membrane. It localises to the membrane. It catalyses the reaction ADP(in) + ATP(out) = ADP(out) + ATP(in). The enzyme catalyses H(+)(in) = H(+)(out). Its activity is regulated as follows. The matrix-open state (m-state) is inhibited by the membrane-permeable bongkrekic acid (BKA). The cytoplasmic-open state (c-state) is inhibited by the membrane-impermeable toxic inhibitor carboxyatractyloside (CATR). Proton transporter activity is inhibited by ADP:ATP antiporter activity. ADP:ATP antiporter that mediates import of ADP into the mitochondrial matrix for ATP synthesis, and export of ATP out to fuel the cell. Cycles between the cytoplasmic-open state (c-state) and the matrix-open state (m-state): operates by the alternating access mechanism with a single substrate-binding site intermittently exposed to either the cytosolic (c-state) or matrix (m-state) side of the inner mitochondrial membrane. In addition to its ADP:ATP antiporter activity, also involved in mitochondrial uncoupling and mitochondrial permeability transition pore (mPTP) activity. Plays a role in mitochondrial uncoupling by acting as a proton transporter: proton transport uncouples the proton flows via the electron transport chain and ATP synthase to reduce the efficiency of ATP production and cause mitochondrial thermogenesis. Proton transporter activity is inhibited by ADP:ATP antiporter activity, suggesting that SLC25A5/ANT2 acts as a master regulator of mitochondrial energy output by maintaining a delicate balance between ATP production (ADP:ATP antiporter activity) and thermogenesis (proton transporter activity). Proton transporter activity requires free fatty acids as cofactor, but does not transport it. Probably mediates mitochondrial uncoupling in tissues that do not express UCP1. Also plays a key role in mPTP opening, a non-specific pore that enables free passage of the mitochondrial membranes to solutes of up to 1.5 kDa, and which contributes to cell death. It is however unclear if SLC25A5/ANT2 constitutes a pore-forming component of mPTP or regulates it. Acts as a regulator of mitophagy independently of ADP:ATP antiporter activity: promotes mitophagy via interaction with TIMM44, leading to inhibit the presequence translocase TIMM23, thereby promoting stabilization of PINK1. As part of the mitotic spindle-associated MMXD complex it may play a role in chromosome segregation. The chain is ADP/ATP translocase 2 from Tachyglossus aculeatus aculeatus (Southeast Australian short-beaked echidna).